We begin with the raw amino-acid sequence, 68 residues long: Small proline-rich protein 2K (68 aa).

The 1; truncated repeat unit spans residues 21–26 (PKPCSP). The 3.5 X 9 AA approximate tandem repeats stretch occupies residues 21–65 (PKPCSPPKCPEPCPPPKCPETCPPQPCQRKCPPVLEAPCQQKCPS). A run of 3 repeats spans residues 27–35 (PKCPEPCPP), 36–44 (PKCPETCPP), and 45–53 (QPCQRKCPP).

Belongs to the cornifin (SPRR) family. As to expression, not expressed in uterus.

It localises to the cytoplasm. Cross-linked envelope protein of keratinocytes. It is a keratinocyte protein that first appears in the cell cytosol, but ultimately becomes cross-linked to membrane proteins by transglutaminase. All that results in the formation of an insoluble envelope beneath the plasma membrane. This is Small proline-rich protein 2K (Sprr2k) from Mus musculus (Mouse).